Here is a 475-residue protein sequence, read N- to C-terminus: E3 ubiquitin-protein ligase TRIM62 (475 aa).

The segment at 11-54 (CSICLSIYQDPVSLGCEHYFCRRCITEHWVRQEAQGARDCPECR) adopts an RING-type zinc-finger fold. Residues 88 to 128 (RAARPCQAHDKVKLFCLTDRALLCFFCDEPALHEQHQVTGI) form a B box-type zinc finger. The Zn(2+) site is built by Cys93, His96, Cys114, and His120. A coiled-coil region spans residues 127 to 241 (GIDDAFDELQ…LQERLAETDR (115 aa)). One can recognise a B30.2/SPRY domain in the interval 277–475 (PLQYTIWKSL…QPLRINTVRI (199 aa)).

The protein belongs to the TRIM/RBCC family. In terms of assembly, interacts with the ubiquitin-conjugating enzyme, UBE2D2. Post-translationally, polyubiquitinated, autoubiquitinated in the presence of UBE2D2.

It localises to the cytoplasm. It catalyses the reaction S-ubiquitinyl-[E2 ubiquitin-conjugating enzyme]-L-cysteine + [acceptor protein]-L-lysine = [E2 ubiquitin-conjugating enzyme]-L-cysteine + N(6)-ubiquitinyl-[acceptor protein]-L-lysine.. It functions in the pathway protein modification; protein ubiquitination. Its function is as follows. E3 ubiquitin ligase that plays a role in antifungal immunity by mediating 'Lys-27'-linked ubiquitination of CARD9 downstream of C-type lectin receptors; leading to CARD9 activation, followed by activation of NF-kappa-B and MAP kinase p38 pathways. E3 ubiquitin ligase activity is dependent on E2 ubiquitin-conjugating enzyme UBE2D2. This Homo sapiens (Human) protein is E3 ubiquitin-protein ligase TRIM62.